The primary structure comprises 151 residues: Arginine regulator (151 aa).

The protein belongs to the ArgR family.

The protein localises to the cytoplasm. The protein operates within amino-acid degradation; L-arginine degradation via ADI pathway. Its function is as follows. Regulates the transcription of the arc operon, involved in arginine catabolism. This chain is Arginine regulator (argR1), found in Clostridium perfringens (strain 13 / Type A).